The primary structure comprises 312 residues: Holliday junction branch migration complex subunit RuvB (312 aa).

The tract at residues 1-168 is large ATPase domain (RuvB-L); sequence MKTNYEFRPQ…FGHIFHLNEY (168 aa). ATP-binding positions include Arg8, Gly49, Lys52, Thr53, Thr54, 115–117, Arg158, Tyr168, and Arg206; that span reads EDF. Thr53 provides a ligand contact to Mg(2+). The small ATPAse domain (RuvB-S) stretch occupies residues 169 to 234; it reads EPSEISAIIL…DIKNIFKKIQ (66 aa). The tract at residues 237–312 is head domain (RuvB-H); sequence EFGLDEQDIN…DFLKNNQLIK (76 aa). Residues Lys290 and Arg295 each coordinate DNA.

Belongs to the RuvB family. In terms of assembly, homohexamer. Forms an RuvA(8)-RuvB(12)-Holliday junction (HJ) complex. HJ DNA is sandwiched between 2 RuvA tetramers; dsDNA enters through RuvA and exits via RuvB. An RuvB hexamer assembles on each DNA strand where it exits the tetramer. Each RuvB hexamer is contacted by two RuvA subunits (via domain III) on 2 adjacent RuvB subunits; this complex drives branch migration. In the full resolvosome a probable DNA-RuvA(4)-RuvB(12)-RuvC(2) complex forms which resolves the HJ.

Its subcellular location is the cytoplasm. The catalysed reaction is ATP + H2O = ADP + phosphate + H(+). In terms of biological role, the RuvA-RuvB-RuvC complex processes Holliday junction (HJ) DNA during genetic recombination and DNA repair, while the RuvA-RuvB complex plays an important role in the rescue of blocked DNA replication forks via replication fork reversal (RFR). RuvA specifically binds to HJ cruciform DNA, conferring on it an open structure. The RuvB hexamer acts as an ATP-dependent pump, pulling dsDNA into and through the RuvAB complex. RuvB forms 2 homohexamers on either side of HJ DNA bound by 1 or 2 RuvA tetramers; 4 subunits per hexamer contact DNA at a time. Coordinated motions by a converter formed by DNA-disengaged RuvB subunits stimulates ATP hydrolysis and nucleotide exchange. Immobilization of the converter enables RuvB to convert the ATP-contained energy into a lever motion, pulling 2 nucleotides of DNA out of the RuvA tetramer per ATP hydrolyzed, thus driving DNA branch migration. The RuvB motors rotate together with the DNA substrate, which together with the progressing nucleotide cycle form the mechanistic basis for DNA recombination by continuous HJ branch migration. Branch migration allows RuvC to scan DNA until it finds its consensus sequence, where it cleaves and resolves cruciform DNA. The protein is Holliday junction branch migration complex subunit RuvB of Ureaplasma parvum serovar 3 (strain ATCC 27815 / 27 / NCTC 11736).